A 375-amino-acid chain; its full sequence is Delta(12) fatty acid dehydrogenase (375 aa).

Helical transmembrane passes span 54 to 74 (IIAY…PAPL) and 77 to 97 (LAWP…WVIG). Residues 98–102 (HECGH) carry the Histidine box-1 motif. A helical transmembrane segment spans residues 110–130 (WVDDTVGFILHSFLMTPYFSW). Residues 134–138 (HRNHH) carry the Histidine box-2 motif. Helical transmembrane passes span 172–192 (LLIM…TNIS), 218–238 (VLLS…AVAA), and 242–262 (AWVT…FDII). The short motif at 308–312 (HVMHH) is the Histidine box-3 element.

It belongs to the fatty acid desaturase type 1 family. Fe cation is required as a cofactor. As to expression, seed.

It is found in the membrane. It catalyses the reaction a (9Z,12Z)-octadecadienoyl-containing glycerolipid + 2 Fe(II)-[cytochrome b5] + O2 + 2 H(+) = a (9Z)-octadec-9-en-12-ynoyl-containing glycerolipid + 2 Fe(III)-[cytochrome b5] + 2 H2O. It participates in lipid metabolism; polyunsaturated fatty acid biosynthesis. Changes the delta-12 double bond of linoleic acid into a triple bond in the biosynthesis of crepenynic acid. The polypeptide is Delta(12) fatty acid dehydrogenase (Crepis alpina (Hawksbeard)).